The following is a 156-amino-acid chain: Small ribosomal subunit protein uS7c (156 aa).

Belongs to the universal ribosomal protein uS7 family. In terms of assembly, part of the 30S ribosomal subunit.

It localises to the plastid. The protein localises to the chloroplast. One of the primary rRNA binding proteins, it binds directly to 16S rRNA where it nucleates assembly of the head domain of the 30S subunit. This Cycas revoluta (Sago palm) protein is Small ribosomal subunit protein uS7c (rps7).